Reading from the N-terminus, the 463-residue chain is Nucleobindin-1 (463 aa).

Positions 1–26 are cleaved as a signal peptide; it reads MPPSGPQGTLLLLPLLLLLLLRAVLA. S86 is modified (phosphoserine). Phosphothreonine is present on T148. A coiled-coil region spans residues 150–218; it reads EARDLELLIQ…QQRRHREHPK (69 aa). The DNA-binding element occupies 172–218; the sequence is HHEEFKRYEMLKEHERRRYLESLGEEQRKEAERRLEEQQRRHREHPK. Over residues 193 to 210 the composition is skewed to basic and acidic residues; it reads SLGEEQRKEAERRLEEQQ. The tract at residues 193–221 is disordered; sequence SLGEEQRKEAERRLEEQQRRHREHPKVNV. The binds to GNAI2 and GNAI3 stretch occupies residues 228-321; that stretch reads LKEVWEELDG…VTLGEFLAST (94 aa). EF-hand domains are found at residues 240-275 and 292-327; these read PNRF…ELEK and ERLR…KEFG. Residues D253, N255, D257, E264, D305, N307, D309, and E316 each contribute to the Ca(2+) site. Positions 303-333 match the GBA motif; the sequence is NVDTNQDRLVTLGEFLASTQRKEFGDTGEGW. The stretch at 341 to 409 forms a coiled coil; that stretch reads AYTEEELRRF…KQQQQQQQQQ (69 aa). The tract at residues 368-463 is disordered; sequence LSQETEALGR…LPEVEVPQHL (96 aa). S369 carries the post-translational modification Phosphoserine. Positions 439–463 are enriched in basic and acidic residues; that stretch reads DQKEVDTSEKKLLERLPEVEVPQHL.

The protein belongs to the nucleobindin family. In terms of assembly, interacts (via GBA motif) with guanine nucleotide-binding protein G(i) alpha subunits GNAI1, GNAI2 and GNAI3 with higher affinity for GNAI1 and GNAI3 than for GNAI2. Preferentially interacts with inactive rather than active GNAI3. Interaction with GNAI3 is inhibited when NUCB1 binds calcium, probably due to a conformational change which renders the GBA motif inaccessible.

Its subcellular location is the golgi apparatus. The protein resides in the cis-Golgi network membrane. It localises to the cytoplasm. It is found in the secreted. Major calcium-binding protein of the Golgi which may have a role in calcium homeostasis. Acts as a non-receptor guanine nucleotide exchange factor which binds to and activates alpha subunits of guanine nucleotide-binding proteins (G proteins). This Pongo abelii (Sumatran orangutan) protein is Nucleobindin-1 (NUCB1).